Consider the following 119-residue polypeptide: cAMP-responsive element-binding protein-like 2 (119 aa).

The segment at 1–23 (MDDSKIVAGKVKKPGKRGRKPAK) is disordered. Residues 10–21 (KVKKPGKRGRKP) show a composition bias toward basic residues. Residues 23 to 86 (KIDLKAKLER…LAMDQGKIPS (64 aa)) enclose the bZIP domain. The basic motif stretch occupies residues 29–60 (KLERSRQSARECRARKKLRYQYLEELVSSKER). The segment at 62–69 (ICALREEL) is leucine-zipper. The tract at residues 95 to 119 (DEQKTPQSCSNKTTKNSKYSSSSGI) is disordered. A compositionally biased stretch (low complexity) spans 102–119 (SCSNKTTKNSKYSSSSGI).

This sequence belongs to the bZIP family. ATF subfamily.

The protein resides in the nucleus. Probable regulator of creb1 transcriptional activity which is involved in adipose cells differentiation. May also play a regulatory role in the cell cycle. The protein is cAMP-responsive element-binding protein-like 2 (crebl2) of Danio rerio (Zebrafish).